Consider the following 84-residue polypeptide: Acid stress protein IbaG (84 aa).

The protein belongs to the BolA/IbaG family.

Functionally, involved in cell resistance against acid stress. The sequence is that of Acid stress protein IbaG from Escherichia coli O6:H1 (strain CFT073 / ATCC 700928 / UPEC).